Consider the following 277-residue polypeptide: Energy-coupling factor transporter ATP-binding protein EcfA1 (277 aa).

The region spanning 5 to 240 (LEVENLVFKY…SEDMVEIGLD (236 aa)) is the ABC transporter domain. 40-47 (GQNGSGKS) contacts ATP. Catalysis depends on Glu-166, which acts as the Proton acceptor.

It belongs to the ABC transporter superfamily. Energy-coupling factor EcfA family. Forms a stable energy-coupling factor (ECF) transporter complex composed of 2 membrane-embedded substrate-binding proteins (S component), 2 ATP-binding proteins (A component) and 2 transmembrane proteins (T component). In L.lactis forms a stable complex with EcfA' and EcfT and substrate-binding components. In E.coli forms a stable complex with EcfA', EcfT and individually with 3 tested substrate-binding components (BioY, NiaX and ThiT) with a stoichiometry of 1.1:1:1. The core ECF complex interacts with a number of substrate-specific binding components, including BioY, BioY2, HmpT, NiaX, PanT, QueT, RibU and ThiT.

It localises to the cell membrane. Its function is as follows. ATP-binding (A) component of a common energy-coupling factor (ECF) ABC-transporter complex. Unlike classic ABC transporters this ECF transporter provides the energy necessary to transport a number of different substrates. In this organism these probably include biotin, thiamine precursor, niacin, pantothenic acid, queuosine precursor, riboflavin and thiamine. Uptake of niacin or riboflavin into proteosomes containing EcfA1A2T and Niax or RibU has been demonstrated. Uptake requires hydrolyzable Mg-ATP and is substrate-specific; NiaX-containing proteosomes did not transport riboflavin. This is Energy-coupling factor transporter ATP-binding protein EcfA1 from Lactococcus lactis subsp. cremoris (strain MG1363).